We begin with the raw amino-acid sequence, 302 residues long: 4-diphosphocytidyl-2-C-methyl-D-erythritol kinase (302 aa).

The active site involves K32. ATP is bound at residue 115-125 (PMGGGVGGGSS). D157 is an active-site residue.

This sequence belongs to the GHMP kinase family. IspE subfamily.

It catalyses the reaction 4-CDP-2-C-methyl-D-erythritol + ATP = 4-CDP-2-C-methyl-D-erythritol 2-phosphate + ADP + H(+). Its pathway is isoprenoid biosynthesis; isopentenyl diphosphate biosynthesis via DXP pathway; isopentenyl diphosphate from 1-deoxy-D-xylulose 5-phosphate: step 3/6. Functionally, catalyzes the phosphorylation of the position 2 hydroxy group of 4-diphosphocytidyl-2C-methyl-D-erythritol. The chain is 4-diphosphocytidyl-2-C-methyl-D-erythritol kinase from Actinobacillus succinogenes (strain ATCC 55618 / DSM 22257 / CCUG 43843 / 130Z).